The sequence spans 691 residues: ATP-dependent zinc metalloprotease FtsH 2 (691 aa).

A disordered region spans residues Met1–Asp48. The Cytoplasmic portion of the chain corresponds to Met1–Asp64. The span at Glu14–Arg31 shows a compositional bias: basic and acidic residues. A helical transmembrane segment spans residues Val65–Leu85. At Gly86–Gln168 the chain is on the extracellular side. A helical transmembrane segment spans residues Val169–Phe189. Residues Met190–Ala691 are Cytoplasmic-facing. Gly265–Thr272 contacts ATP. Residue His486 participates in Zn(2+) binding. Glu487 is a catalytic residue. Residues His490 and Asp563 each contribute to the Zn(2+) site.

It in the central section; belongs to the AAA ATPase family. This sequence in the C-terminal section; belongs to the peptidase M41 family. Homohexamer. It depends on Zn(2+) as a cofactor.

The protein localises to the cell membrane. Its function is as follows. Acts as a processive, ATP-dependent zinc metallopeptidase for both cytoplasmic and membrane proteins. Plays a role in the quality control of integral membrane proteins. In Conexibacter woesei (strain DSM 14684 / CCUG 47730 / CIP 108061 / JCM 11494 / NBRC 100937 / ID131577), this protein is ATP-dependent zinc metalloprotease FtsH 2.